The primary structure comprises 320 residues: MSTPFKMERGVKYRDAAKTSIIPVKNIDPNQELLKKPEWMKIKLPASSAKIESIKNGMRRHGLHSVCEEASCPNLHECFNHGTATFMILGAICTRRCPFCDVAHGKPLPPDPEEPQKLAETIQDMKLKYVVITSVDRDDLPDRGAGHFSECVKAVRELNPNIKIEILVPDFRGRITQALEKLKDNPPDVFNHNLENVPRLYKEIRPGADYEWSLKLLREFKEIFPNIPTKSGLMVGLGETNEEILQVMQDLRDNGVTMLTLGQYLQPSRHHLPVARYVPPTEFDEFRDKANEMGFEHAACGPFVRSSYHADLQASGGLVK.

[4Fe-4S] cluster is bound by residues cysteine 67, cysteine 72, cysteine 78, cysteine 93, cysteine 97, cysteine 100, and serine 307. Positions phenylalanine 79–glutamate 296 constitute a Radical SAM core domain.

Belongs to the radical SAM superfamily. Lipoyl synthase family. [4Fe-4S] cluster serves as cofactor.

The protein localises to the cytoplasm. It carries out the reaction [[Fe-S] cluster scaffold protein carrying a second [4Fe-4S](2+) cluster] + N(6)-octanoyl-L-lysyl-[protein] + 2 oxidized [2Fe-2S]-[ferredoxin] + 2 S-adenosyl-L-methionine + 4 H(+) = [[Fe-S] cluster scaffold protein] + N(6)-[(R)-dihydrolipoyl]-L-lysyl-[protein] + 4 Fe(3+) + 2 hydrogen sulfide + 2 5'-deoxyadenosine + 2 L-methionine + 2 reduced [2Fe-2S]-[ferredoxin]. Its pathway is protein modification; protein lipoylation via endogenous pathway; protein N(6)-(lipoyl)lysine from octanoyl-[acyl-carrier-protein]: step 2/2. In terms of biological role, catalyzes the radical-mediated insertion of two sulfur atoms into the C-6 and C-8 positions of the octanoyl moiety bound to the lipoyl domains of lipoate-dependent enzymes, thereby converting the octanoylated domains into lipoylated derivatives. This is Lipoyl synthase from Haemophilus influenzae (strain 86-028NP).